A 386-amino-acid chain; its full sequence is ORC1-type DNA replication protein 3 (386 aa).

ATP contacts are provided by residues 65–69 and tyrosine 206; that span reads TGKTF.

The protein belongs to the CDC6/cdc18 family.

In terms of biological role, involved in regulation of DNA replication. The polypeptide is ORC1-type DNA replication protein 3 (cdc6-3) (Sulfurisphaera tokodaii (strain DSM 16993 / JCM 10545 / NBRC 100140 / 7) (Sulfolobus tokodaii)).